The chain runs to 267 residues: Deoxyribose-phosphate aldolase (267 aa).

Residue Asp-123 is the Proton donor/acceptor of the active site. The active-site Schiff-base intermediate with acetaldehyde is the Lys-185. Lys-217 (proton donor/acceptor) is an active-site residue.

It belongs to the DeoC/FbaB aldolase family. DeoC type 1 subfamily.

The protein resides in the cytoplasm. It catalyses the reaction 2-deoxy-D-ribose 5-phosphate = D-glyceraldehyde 3-phosphate + acetaldehyde. It participates in carbohydrate degradation; 2-deoxy-D-ribose 1-phosphate degradation; D-glyceraldehyde 3-phosphate and acetaldehyde from 2-deoxy-alpha-D-ribose 1-phosphate: step 2/2. Functionally, catalyzes a reversible aldol reaction between acetaldehyde and D-glyceraldehyde 3-phosphate to generate 2-deoxy-D-ribose 5-phosphate. The polypeptide is Deoxyribose-phosphate aldolase (Coccidioides immitis (strain RS) (Valley fever fungus)).